Consider the following 562-residue polypeptide: Phosphoglucomutase-1 (562 aa).

An N-acetylmethionine modification is found at Met1. Lys16 carries the post-translational modification N6-acetyllysine. Arg23 contacts alpha-D-glucose 1,6-bisphosphate. The residue at position 115 (Thr115) is a Phosphothreonine. Ser117 contacts alpha-D-glucose 1,6-bisphosphate. Ser117 serves as the catalytic Phosphoserine intermediate. A Mg(2+)-binding site is contributed by Ser117. 2 positions are modified to phosphoserine: Ser117 and Ser134. Thr185 carries the phosphothreonine modification. A phosphoserine mark is found at Ser206 and Ser213. Mg(2+) is bound by residues Asp288, Asp290, and Asp292. 2 residues coordinate alpha-D-glucose 1,6-bisphosphate: Asp292 and Arg293. An N6-acetyllysine modification is found at Lys349. Position 353 is a phosphotyrosine (Tyr353). Residue Thr357 participates in alpha-D-glucose 1,6-bisphosphate binding. Ser369 carries the phosphoserine modification. The alpha-D-glucose 1,6-bisphosphate site is built by Glu376, Ser378, and Lys389. A Phosphoserine modification is found at Ser378. Lys419 carries the post-translational modification N6-succinyllysine. The residue at position 467 (Thr467) is a Phosphothreonine; by PAK1. Phosphoserine is present on residues Ser477, Ser485, and Ser505. A Phosphothreonine modification is found at Thr507. Phosphoserine occurs at positions 509 and 541.

Belongs to the phosphohexose mutase family. As to quaternary structure, monomer. The cofactor is Mg(2+). Phosphorylation at Thr-467 by PAK1 significantly enhances enzymatic activity.

It is found in the cytoplasm. It catalyses the reaction alpha-D-glucose 1-phosphate = alpha-D-glucose 6-phosphate. The enzyme catalyses O-phospho-L-seryl-[protein] + alpha-D-glucose 1-phosphate = alpha-D-glucose 1,6-bisphosphate + L-seryl-[protein]. The catalysed reaction is alpha-D-glucose 1,6-bisphosphate + L-seryl-[protein] = O-phospho-L-seryl-[protein] + alpha-D-glucose 6-phosphate. Catalyzes the reversible isomerization of alpha-D-glucose 1-phosphate to alpha-D-glucose 6-phosphate. The mechanism proceeds via the intermediate compound alpha-D-glucose 1,6-bisphosphate. This enzyme participates in both the breakdown and synthesis of glucose. This is Phosphoglucomutase-1 (PGM1) from Macaca fascicularis (Crab-eating macaque).